The sequence spans 967 residues: Importin-alpha re-exporter (967 aa).

Positions 20–95 constitute an Importin N-terminal domain; sequence AEEALKVWEL…KREIINLMLK (76 aa).

The protein belongs to the XPO2/CSE1 family. In terms of assembly, binds with high affinity to importin-alpha only in the presence of RanGTP.

The protein localises to the cytoplasm. Its subcellular location is the nucleus envelope. Its function is as follows. Export receptor for importin alpha. Mediates importin-alpha re-export from the nucleus to the cytoplasm after import substrates have been released into the nucleoplasm. The polypeptide is Importin-alpha re-exporter (kap109) (Schizosaccharomyces pombe (strain 972 / ATCC 24843) (Fission yeast)).